The sequence spans 71 residues: Sec-independent protein translocase protein TatA (71 aa).

A helical membrane pass occupies residues 1 to 21; sequence MGSFSLLHWLVVLVIVLLVFG. The tract at residues 43–71 is disordered; sequence LHEDDKPTDQLGSTSQSTASGPQQDHGKH. Residues 52–65 are compositionally biased toward polar residues; that stretch reads QLGSTSQSTASGPQ.

The protein belongs to the TatA/E family. In terms of assembly, the Tat system comprises two distinct complexes: a TatABC complex, containing multiple copies of TatA, TatB and TatC subunits, and a separate TatA complex, containing only TatA subunits. Substrates initially bind to the TatABC complex, which probably triggers association of the separate TatA complex to form the active translocon.

Its subcellular location is the cell inner membrane. In terms of biological role, part of the twin-arginine translocation (Tat) system that transports large folded proteins containing a characteristic twin-arginine motif in their signal peptide across membranes. TatA could form the protein-conducting channel of the Tat system. The sequence is that of Sec-independent protein translocase protein TatA from Xylella fastidiosa (strain M12).